The chain runs to 235 residues: Small capsomere-interacting protein (235 aa).

The disordered stretch occupies residues 104–235; that stretch reads PRIIRPQPPN…SGNASRSRRV (132 aa). Residues 127 to 139 are compositionally biased toward polar residues; that stretch reads PQKTQSADQSALQ. Residues 158–188 are compositionally biased toward low complexity; that stretch reads TTSASVGQQQHVVSGSSGQQPQQGAQSSTVQ. Residues 220-235 are compositionally biased toward polar residues; it reads LSHTGQSGNASRSRRV.

Belongs to the herpesviridae small capsomere-interacting protein family. As to quaternary structure, interacts with the major capsid protein/MCP.

It localises to the virion. Its subcellular location is the host nucleus. Its function is as follows. Participates in the assembly of the infectious particles by decorating the outer surface of the capsid shell and thus forming a layer between the capsid and the tegument. Complexes composed of the capsid protein VP5 and VP26 assemble together in the host cytoplasm and are translocated to the nucleus, where they accumulate and participate in capsid assembly. Participates in the assembly of the infectious particles by decorating the outer surface of the capsid shell and thus forming a layer between the capsid and the tegument. Complexes composed of the major capsid protein and small capsomere-interacting protein/SCP assemble together in the host cytoplasm and are translocated to the nucleus, where they accumulate and participate in capsid assembly. This Homo sapiens (Human) protein is Small capsomere-interacting protein.